A 412-amino-acid chain; its full sequence is MIGMLESLQHESDLLQHDQIHTGEKPYECNECRKTFSLKQNLVEHKKMHTGEKSHECTECGKVCSRVSSLTLHLRSHTGKKAYKCNKCGKAFSQKENFLSHQKHHTGEKPYECEKVSIQMPTIIRHQKNHTGTKPYACKECGKAFNGKAYLTEHEKIHTGEKPFECNQCGRAFSQKQYLIKHQNIHTGKKPFKCSECGKAFSQKENLIIHQRIHTGEKPYECKGCGKAFIQKSSLIRHQRSHTGEKPYTCKECGKAFSGKSNLTEHEKIHIGEKPYKCNECGTIFRQKQYLIKHHNIHTGEKPYECNKCGKAFSRITSLIVHVRIHTGDKPYECKVCGKAFCQSSSLTVHMRSHTGEKPYGCNECGKAFSQFSTLALHMRIHTGEKPYQCSECGKAFSQKSHHIRHQRIHTH.

13 consecutive C2H2-type zinc fingers follow at residues 27–49 (YECNECRKTFSLKQNLVEHKKMH), 55–77 (HECTECGKVCSRVSSLTLHLRSH), 83–105 (YKCNKCGKAFSQKENFLSHQKHH), 136–158 (YACKECGKAFNGKAYLTEHEKIH), 164–186 (FECNQCGRAFSQKQYLIKHQNIH), 192–214 (FKCSECGKAFSQKENLIIHQRIH), 220–242 (YECKGCGKAFIQKSSLIRHQRSH), 248–270 (YTCKECGKAFSGKSNLTEHEKIH), 276–298 (YKCNECGTIFRQKQYLIKHHNIH), 304–326 (YECNKCGKAFSRITSLIVHVRIH), 332–354 (YECKVCGKAFCQSSSLTVHMRSH), 360–382 (YGCNECGKAFSQFSTLALHMRIH), and 388–412 (YQCSECGKAFSQKSHHIRHQRIHTH).

The protein belongs to the krueppel C2H2-type zinc-finger protein family. In terms of assembly, binds DNA. Interacts with GATA4.

It is found in the nucleus. Functionally, transcription factor that acts as a cardiac regulator and an effector of alpha1-adrenergic signaling. Binds to PE response elements (PERE) present in the promoter of genes such as ANF/NPPA and acts as a direct transcriptional activator of NPPA. Also acts as a cofactor with GATA4, a key cardiac regulator. The chain is Zinc finger protein 260 (ZNF260) from Homo sapiens (Human).